A 1178-amino-acid polypeptide reads, in one-letter code: DNA-directed RNA polymerase subunit beta' (1178 aa).

Zn(2+)-binding residues include Cys-60, Cys-62, Cys-75, and Cys-78. Mg(2+)-binding residues include Asp-450, Asp-452, and Asp-454. Residues Cys-795, Cys-869, Cys-876, and Cys-879 each contribute to the Zn(2+) site.

This sequence belongs to the RNA polymerase beta' chain family. As to quaternary structure, the RNAP catalytic core consists of 2 alpha, 1 beta, 1 beta' and 1 omega subunit. When a sigma factor is associated with the core the holoenzyme is formed, which can initiate transcription. Mg(2+) serves as cofactor. Requires Zn(2+) as cofactor.

The enzyme catalyses RNA(n) + a ribonucleoside 5'-triphosphate = RNA(n+1) + diphosphate. In terms of biological role, DNA-dependent RNA polymerase catalyzes the transcription of DNA into RNA using the four ribonucleoside triphosphates as substrates. The chain is DNA-directed RNA polymerase subunit beta' from Clostridium botulinum (strain Loch Maree / Type A3).